The primary structure comprises 642 residues: MGRFTKNIVLYLLIIAAFVIAIDAFSGQSANKSELSYTGFIQQVQQKKVESVTITNDHGIKGKLKNGTEFNSYAPTDETLIKTLQDNGVEITAAPPEQPAWWMSLLGSAIPIIILVVLFFFIMQQTQGGGGRVMNFGKSRAKLMGEGNVKVSFKDVAGAEEAKQELEEVVEFLKDPGKFTTIGAKIPKGVLLAGPPGTGKTLLAKAVAGEAGVPFFTISGSDFVEMFVGVGASRVRDLFTQAKKNAPCIIFIDEIDAVGRQRGAGLGGGHDEREQTLNQLLVEMDGFGANEGIITIAATNRPDILDPALLRPGRFDRQVIVGRPDLRGREAILKVHARNKPLADDVDLKIIAKKTPGFTGADLSNLLNEAALLAARLNKKVITMAEVEEASEKVSMGPERRSHIVSDKDRKLTAYHESGHAIVAHLLPHADPVHKVTIIPRGAAGGYTMMLPTEEQNYKTKSQLLADIRVALGGRIAEALILDEISTGASGDLQSVTNTARAMVTRWGMSDELGPIVFGEQQEQIFLGKNLGHERNYSEEIAAKIDSEIHRIVEEAYKDVTKLLSDNEKFLHDMANALLEEETIDAKAVDNLYKYGTTKEPEAEEPKVASEADSSIVPEGVDAKKTTSTVADLSEASSNEIK.

Residues 1–6 lie on the Cytoplasmic side of the membrane; the sequence is MGRFTK. Residues 7–27 form a helical membrane-spanning segment; the sequence is NIVLYLLIIAAFVIAIDAFSG. At 28–101 the chain is on the extracellular side; it reads QSANKSELSY…TAAPPEQPAW (74 aa). A helical membrane pass occupies residues 102 to 122; that stretch reads WMSLLGSAIPIIILVVLFFFI. Over 123 to 642 the chain is Cytoplasmic; sequence MQQTQGGGGR…LSEASSNEIK (520 aa). 194 to 201 is a binding site for ATP; the sequence is GPPGTGKT. Histidine 416 provides a ligand contact to Zn(2+). Residue glutamate 417 is part of the active site. Zn(2+) is bound by residues histidine 420 and aspartate 492. Residues 597–610 are compositionally biased toward basic and acidic residues; it reads TTKEPEAEEPKVAS. Positions 597–642 are disordered; the sequence is TTKEPEAEEPKVASEADSSIVPEGVDAKKTTSTVADLSEASSNEIK. Positions 626-642 are enriched in polar residues; that stretch reads TTSTVADLSEASSNEIK.

This sequence in the central section; belongs to the AAA ATPase family. In the C-terminal section; belongs to the peptidase M41 family. Homohexamer. Requires Zn(2+) as cofactor.

Its subcellular location is the cell membrane. Its function is as follows. Acts as a processive, ATP-dependent zinc metallopeptidase for both cytoplasmic and membrane proteins. Plays a role in the quality control of integral membrane proteins. This Veillonella parvula (strain ATCC 10790 / DSM 2008 / CCUG 5123 / JCM 12972 / NCTC 11810 / Te3) (Veillonella alcalescens) protein is ATP-dependent zinc metalloprotease FtsH.